A 295-amino-acid chain; its full sequence is RNA polymerase sigma factor RpoH (295 aa).

The interval M52–S121 is sigma-70 factor domain-2. Residues E76 to S79 carry the Interaction with polymerase core subunit RpoC motif. The sigma-70 factor domain-4 stretch occupies residues A230–K281. Positions L254–V273 form a DNA-binding region, H-T-H motif.

Belongs to the sigma-70 factor family. RpoH subfamily. As to quaternary structure, interacts with the RNA polymerase core enzyme.

Its subcellular location is the cytoplasm. Sigma factors are initiation factors that promote the attachment of RNA polymerase to specific initiation sites and are then released. This sigma factor is involved in regulation of expression of heat shock genes. This Caulobacter vibrioides (strain ATCC 19089 / CIP 103742 / CB 15) (Caulobacter crescentus) protein is RNA polymerase sigma factor RpoH.